Consider the following 367-residue polypeptide: Putative 12-oxophytodienoate reductase 11 (367 aa).

FMN is bound by residues 26–28 (PLT), alanine 59, and glutamine 101. Substrate is bound at residue 178 to 181 (HGAH). Residue tyrosine 183 is the Proton donor of the active site. Residue arginine 230 coordinates FMN. Arginine 270 is a binding site for substrate. FMN is bound by residues glycine 300 and 321–322 (GR).

The protein belongs to the NADH:flavin oxidoreductase/NADH oxidase family. Requires FMN as cofactor.

Putative oxophytodienoate reductase that may be involved in the biosynthesis or metabolism of oxylipin signaling molecules. In Oryza sativa subsp. japonica (Rice), this protein is Putative 12-oxophytodienoate reductase 11 (OPR11).